The sequence spans 673 residues: UvrABC system protein B (673 aa).

The Helicase ATP-binding domain maps to Ala-26–Arg-414. Residue Gly-39 to Thr-46 participates in ATP binding. The short motif at Tyr-92–Ile-115 is the Beta-hairpin element. Residues Gln-431–Met-597 enclose the Helicase C-terminal domain. The tract at residues Arg-601–Tyr-626 is disordered. The region spanning Ala-635–Ala-670 is the UVR domain.

It belongs to the UvrB family. As to quaternary structure, forms a heterotetramer with UvrA during the search for lesions. Interacts with UvrC in an incision complex.

It is found in the cytoplasm. In terms of biological role, the UvrABC repair system catalyzes the recognition and processing of DNA lesions. A damage recognition complex composed of 2 UvrA and 2 UvrB subunits scans DNA for abnormalities. Upon binding of the UvrA(2)B(2) complex to a putative damaged site, the DNA wraps around one UvrB monomer. DNA wrap is dependent on ATP binding by UvrB and probably causes local melting of the DNA helix, facilitating insertion of UvrB beta-hairpin between the DNA strands. Then UvrB probes one DNA strand for the presence of a lesion. If a lesion is found the UvrA subunits dissociate and the UvrB-DNA preincision complex is formed. This complex is subsequently bound by UvrC and the second UvrB is released. If no lesion is found, the DNA wraps around the other UvrB subunit that will check the other stand for damage. The sequence is that of UvrABC system protein B from Xanthomonas campestris pv. campestris (strain 8004).